The chain runs to 134 residues: Insulin-like peptide 4 (134 aa).

The N-terminal stretch at 1–26 (MSLIRLGLALLLLLATVSQLLQPVQG) is a signal peptide. 3 disulfide bridges follow: cysteine 31–cysteine 120, cysteine 43–cysteine 133, and cysteine 119–cysteine 124. The propeptide at 54–108 (SSASKDARVRDLIRKLQQPDEDIEQETETGRLKQKHTDADTEKGVPPAVGSGRKL) is connecting peptide. Residues 72 to 107 (PDEDIEQETETGRLKQKHTDADTEKGVPPAVGSGRK) are disordered. The span at 81 to 96 (ETGRLKQKHTDADTEK) shows a compositional bias: basic and acidic residues.

Belongs to the insulin family. As to quaternary structure, heterodimer of a B chain and an A chain linked by two disulfide bonds. Expressed at a high level in the embryonic mesoderm, with expression continuing after gastrulation and reducing from stage 12 onwards. Highly expressed in the embryonic anterior midgut rudiment and larval midgut.

Its subcellular location is the secreted. Functionally, possible ligand of InR/insulin-like receptor. The sequence is that of Insulin-like peptide 4 from Drosophila melanogaster (Fruit fly).